The sequence spans 525 residues: GMP synthase [glutamine-hydrolyzing] (525 aa).

Residues 11-200 (PVLVVDFGAQ…LTEIAGLEQN (190 aa)) enclose the Glutamine amidotransferase type-1 domain. The active-site Nucleophile is the cysteine 88. Residues histidine 174 and glutamate 176 contribute to the active site. Residues 201-399 (WTAANIAEEL…LGLPEEIVNR (199 aa)) enclose the GMPS ATP-PPase domain. 229–235 (SGGVDSA) contributes to the ATP binding site.

As to quaternary structure, homodimer.

The catalysed reaction is XMP + L-glutamine + ATP + H2O = GMP + L-glutamate + AMP + diphosphate + 2 H(+). It functions in the pathway purine metabolism; GMP biosynthesis; GMP from XMP (L-Gln route): step 1/1. Its function is as follows. Catalyzes the synthesis of GMP from XMP. The polypeptide is GMP synthase [glutamine-hydrolyzing] (Corynebacterium diphtheriae (strain ATCC 700971 / NCTC 13129 / Biotype gravis)).